A 336-amino-acid polypeptide reads, in one-letter code: Anthranilate phosphoribosyltransferase (336 aa).

Residues glycine 82, 85–86 (GD), threonine 90, 92–95 (NIST), 110–118 (KHGNRSVSS), and serine 122 each bind 5-phospho-alpha-D-ribose 1-diphosphate. Glycine 82 provides a ligand contact to anthranilate. Residue serine 94 coordinates Mg(2+). Residue asparagine 113 coordinates anthranilate. Residue arginine 168 coordinates anthranilate. Residues aspartate 227 and glutamate 228 each contribute to the Mg(2+) site.

Belongs to the anthranilate phosphoribosyltransferase family. As to quaternary structure, homodimer. Mg(2+) is required as a cofactor.

It catalyses the reaction N-(5-phospho-beta-D-ribosyl)anthranilate + diphosphate = 5-phospho-alpha-D-ribose 1-diphosphate + anthranilate. Its pathway is amino-acid biosynthesis; L-tryptophan biosynthesis; L-tryptophan from chorismate: step 2/5. In terms of biological role, catalyzes the transfer of the phosphoribosyl group of 5-phosphorylribose-1-pyrophosphate (PRPP) to anthranilate to yield N-(5'-phosphoribosyl)-anthranilate (PRA). This is Anthranilate phosphoribosyltransferase from Leptospira interrogans serogroup Icterohaemorrhagiae serovar copenhageni (strain Fiocruz L1-130).